We begin with the raw amino-acid sequence, 386 residues long: SET and MYND domain-containing protein DDB_G0273589 (386 aa).

Residues 6–294 (NGLELKSSEN…KGDQLTISYI (289 aa)) enclose the SET domain. The MYND-type zinc-finger motif lies at 51 to 94 (CFNCIKQLPSVIKLSLKCNQCNEIWYCNEQCKNENINKHQHYEC). A coiled-coil region spans residues 136-171 (NNKFIEQQLNNNNNNNNDNEQLTNTLDDVFDLVENQ).

It belongs to the class V-like SAM-binding methyltransferase superfamily.

Probable methyltransferase. The protein is SET and MYND domain-containing protein DDB_G0273589 of Dictyostelium discoideum (Social amoeba).